The following is a 296-amino-acid chain: Phosphatidylglycerol--prolipoprotein diacylglyceryl transferase (296 aa).

7 helical membrane passes run 17 to 37 (LAVR…IVVG), 59 to 79 (MMFY…VLFY), 97 to 117 (GGMS…LFAW), 129 to 149 (FVAP…FING), 204 to 224 (SQLY…FLFA), 230 to 250 (MGAI…TVEF), and 257 to 277 (FLGL…PMIL). Residue Arg-142 coordinates a 1,2-diacyl-sn-glycero-3-phospho-(1'-sn-glycerol).

This sequence belongs to the Lgt family.

It is found in the cell inner membrane. The enzyme catalyses L-cysteinyl-[prolipoprotein] + a 1,2-diacyl-sn-glycero-3-phospho-(1'-sn-glycerol) = an S-1,2-diacyl-sn-glyceryl-L-cysteinyl-[prolipoprotein] + sn-glycerol 1-phosphate + H(+). It participates in protein modification; lipoprotein biosynthesis (diacylglyceryl transfer). Functionally, catalyzes the transfer of the diacylglyceryl group from phosphatidylglycerol to the sulfhydryl group of the N-terminal cysteine of a prolipoprotein, the first step in the formation of mature lipoproteins. In Burkholderia cenocepacia (strain HI2424), this protein is Phosphatidylglycerol--prolipoprotein diacylglyceryl transferase.